The primary structure comprises 311 residues: Malate dehydrogenase (311 aa).

Residues 7–13 (GAAGGIG) and aspartate 34 each bind NAD(+). Positions 81 and 87 each coordinate substrate. Residues asparagine 94 and 117–119 (ITN) contribute to the NAD(+) site. Substrate is bound by residues asparagine 119 and arginine 153. Histidine 177 acts as the Proton acceptor in catalysis. Methionine 227 lines the NAD(+) pocket.

This sequence belongs to the LDH/MDH superfamily. MDH type 1 family. Homodimer.

It catalyses the reaction (S)-malate + NAD(+) = oxaloacetate + NADH + H(+). In terms of biological role, catalyzes the reversible oxidation of malate to oxaloacetate. The protein is Malate dehydrogenase of Aliivibrio fischeri (strain MJ11) (Vibrio fischeri).